The following is a 71-amino-acid chain: Translation initiation factor IF-1 (71 aa).

The 71-residue stretch at 1-71 (MSKDDLIQFT…LTKGRVIHRH (71 aa)) folds into the S1-like domain.

This sequence belongs to the IF-1 family. Component of the 30S ribosomal translation pre-initiation complex which assembles on the 30S ribosome in the order IF-2 and IF-3, IF-1 and N-formylmethionyl-tRNA(fMet); mRNA recruitment can occur at any time during PIC assembly.

Its subcellular location is the cytoplasm. One of the essential components for the initiation of protein synthesis. Stabilizes the binding of IF-2 and IF-3 on the 30S subunit to which N-formylmethionyl-tRNA(fMet) subsequently binds. Helps modulate mRNA selection, yielding the 30S pre-initiation complex (PIC). Upon addition of the 50S ribosomal subunit IF-1, IF-2 and IF-3 are released leaving the mature 70S translation initiation complex. This chain is Translation initiation factor IF-1, found in Rickettsia canadensis (strain McKiel).